Reading from the N-terminus, the 123-residue chain is Small ribosomal subunit protein uS12 (123 aa).

Residues 1-24 (MPTINQLVRKGRTPQKVKSKVPAM) form a disordered region. A compositionally biased stretch (basic residues) spans 9 to 19 (RKGRTPQKVKS). Residue Asp-89 is modified to 3-methylthioaspartic acid.

This sequence belongs to the universal ribosomal protein uS12 family. In terms of assembly, part of the 30S ribosomal subunit. Contacts proteins S8 and S17. May interact with IF1 in the 30S initiation complex.

In terms of biological role, with S4 and S5 plays an important role in translational accuracy. Functionally, interacts with and stabilizes bases of the 16S rRNA that are involved in tRNA selection in the A site and with the mRNA backbone. Located at the interface of the 30S and 50S subunits, it traverses the body of the 30S subunit contacting proteins on the other side and probably holding the rRNA structure together. The combined cluster of proteins S8, S12 and S17 appears to hold together the shoulder and platform of the 30S subunit. The chain is Small ribosomal subunit protein uS12 from Sphingopyxis alaskensis (strain DSM 13593 / LMG 18877 / RB2256) (Sphingomonas alaskensis).